The chain runs to 225 residues: Ribosome maturation factor RimP (225 aa).

This sequence belongs to the RimP family.

Its subcellular location is the cytoplasm. Functionally, required for maturation of 30S ribosomal subunits. The chain is Ribosome maturation factor RimP from Rhodospirillum rubrum (strain ATCC 11170 / ATH 1.1.1 / DSM 467 / LMG 4362 / NCIMB 8255 / S1).